A 540-amino-acid polypeptide reads, in one-letter code: MAKDIKFSADARSAMVRGVDILADTVKVTLGPKGRNVVLEKSFGSPLITNDGVTIAKEIELEDHFENMGAKLVSEVASKTNDIAGDGTTTATVLTQAIVREGIKNVTAGANPIGIRRGIEAAVATAVSALKETAIPVSNKEAIAQVAAVSSRSEKVGEYISEAMEKVGNDGVITIEESKGMETELDVVEGMQFDRGYLSQYMVTDSEKMVADLDNPYILITDKKISNIQEILPLLESILKTNRPLLIIADDVDGEALPTLVLNKIRGTFNVVAVKAPGFGDRRKAMLEDIAILTGGTVITEDLGLDLKDATIEALGQASKVTVDKDSTVIVEGSGNPEAIANRVAVIKSQIESATSEFDKEKLQERLAKLSGGVAVIKVGAATETELKEMKLRIEDALNATRAAVEEGIVSGGGTAFVSVLDAVAGLELTGDEATGRNIVLRALEEPVRQIALNAGFEGSIVIDRLKNSEAGTGFNAATGEWVNMIEAGIIDPVKVTRSALQNAASVASLILTTEAVVANQPEPASPAPAMDPSMMGGMM.

ATP is bound by residues 29–32, 86–90, Gly-413, 476–478, and Asp-492; these read TLGP, DGTTT, and NAA.

The protein belongs to the chaperonin (HSP60) family. In terms of assembly, forms a cylinder of 14 subunits composed of two heptameric rings stacked back-to-back. Interacts with the co-chaperonin GroES.

Its subcellular location is the cytoplasm. It carries out the reaction ATP + H2O + a folded polypeptide = ADP + phosphate + an unfolded polypeptide.. Functionally, together with its co-chaperonin GroES, plays an essential role in assisting protein folding. The GroEL-GroES system forms a nano-cage that allows encapsulation of the non-native substrate proteins and provides a physical environment optimized to promote and accelerate protein folding. The sequence is that of Chaperonin GroEL from Streptococcus gordonii.